We begin with the raw amino-acid sequence, 66 residues long: uncharacterized protein (66 aa).

It to E.coli YfhJ.

This is an uncharacterized protein from Pseudomonas aeruginosa (strain ATCC 15692 / DSM 22644 / CIP 104116 / JCM 14847 / LMG 12228 / 1C / PRS 101 / PAO1).